The chain runs to 434 residues: Double-stranded RNA-binding protein 2 (434 aa).

DRBM domains follow at residues 1 to 70 (MYKN…ALSN) and 87 to 155 (VYKN…SLKQ). The segment at 402–434 (EKTASKETERAEFKDSSKGEPETARERLENLKI) is disordered.

As to quaternary structure, heterodimer with DRB1 or DRB5. Interacts with DCL1 and DCL5.

It localises to the cytoplasm. Functionally, binds double-stranded RNA. May be involved in RNA-mediated silencing. The chain is Double-stranded RNA-binding protein 2 (DRB2) from Arabidopsis thaliana (Mouse-ear cress).